The primary structure comprises 658 residues: Threonine--tRNA ligase (658 aa).

Residues 1–64 enclose the TGS domain; the sequence is MSCSISLSFP…GQSGQVEIIT (64 aa). Residues 246 to 549 form a catalytic region; sequence DHRRLGREMD…LIENFAGHMP (304 aa). The Zn(2+) site is built by cysteine 343, histidine 394, and histidine 526.

The protein belongs to the class-II aminoacyl-tRNA synthetase family. In terms of assembly, homodimer. It depends on Zn(2+) as a cofactor.

Its subcellular location is the cytoplasm. The enzyme catalyses tRNA(Thr) + L-threonine + ATP = L-threonyl-tRNA(Thr) + AMP + diphosphate + H(+). Its function is as follows. Catalyzes the attachment of threonine to tRNA(Thr) in a two-step reaction: L-threonine is first activated by ATP to form Thr-AMP and then transferred to the acceptor end of tRNA(Thr). Also edits incorrectly charged L-seryl-tRNA(Thr). This Bartonella tribocorum (strain CIP 105476 / IBS 506) protein is Threonine--tRNA ligase.